The primary structure comprises 333 residues: Probable G-protein coupled receptor 33 (333 aa).

Over 1 to 30 (MDLINSTDYLINASTLVRNSTQFLAPASKM) the chain is Extracellular. N-linked (GlcNAc...) asparagine glycosylation is found at Asn5, Asn12, and Asn19. A helical transmembrane segment spans residues 31 to 53 (IIALSLYISSIIGTITNGLYLWV). The Cytoplasmic portion of the chain corresponds to 54–64 (LRFKMKQTVNT). A helical membrane pass occupies residues 65 to 86 (LLFFHLILSYFISTMILPFMAT). Over 87–103 (SQLQDNHWNFGTALCKV) the chain is Extracellular. Cys101 and Cys179 are oxidised to a cystine. Residues 104-124 (FNGTLSLGMFTSVFFLSAIGL) traverse the membrane as a helical segment. At 125–143 (DRYLLTLHPVWSQQHRTPR) the chain is on the cytoplasmic side. Residues 144-165 (WASSIVLGVWISAAALSIPYLI) traverse the membrane as a helical segment. Over 166 to 209 (FRQTHHDRKGKVTCQNNYAVSTNWESKEMQALRQWIHVACFISR) the chain is Extracellular. A helical membrane pass occupies residues 210–230 (FLLGFLLPFFIIIFCYERVAS). Topologically, residues 231-246 (KVKERSLFKSSKPFKV) are cytoplasmic. A helical membrane pass occupies residues 247–268 (MMTAIISFFVCWMPYHIHQGLL). The Extracellular portion of the chain corresponds to 269–283 (LTTNQSLLLELTLIL). Asn272 carries an N-linked (GlcNAc...) asparagine glycan. A helical transmembrane segment spans residues 284-303 (TVLTTSFNTIFSPTLYLFVG). At 304-333 (ENFKKVFKKSILALFESTFSEDSSVERTQT) the chain is on the cytoplasmic side.

It belongs to the G-protein coupled receptor 1 family.

It is found in the cell membrane. Functionally, orphan receptor; could be a chemoattractant receptor. In Pan troglodytes (Chimpanzee), this protein is Probable G-protein coupled receptor 33 (GPR33).